Reading from the N-terminus, the 717-residue chain is Putative amino acid transporter AAT1 (717 aa).

A compositionally biased stretch (basic and acidic residues) spans 1-10 (MREGAFDASR). The interval 1 to 88 (MREGAFDASR…DRAQTDSRQE (88 aa)) is disordered. Polar residues predominate over residues 16–25 (QRPSSLSTAQ). The span at 26-53 (PPSDSRPPSSSSPPSSSSSSSSASSSSP) shows a compositional bias: low complexity. Residues 74-88 (SAEKMDRAQTDSRQE) are compositionally biased toward basic and acidic residues. The next 8 helical transmembrane spans lie at 124 to 143 (VLTL…PYAM), 149 to 170 (LIGL…YILM), 196 to 216 (AVDA…LVFL), 236 to 253 (HRAA…PLSV), 265 to 283 (FFPV…YRSL), 303 to 320 (FKSF…INVC), 341 to 358 (AALL…LGYL), and 378 to 402 (LMHV…IPTV). The segment at 462–602 (GDAEYGGAEA…REEREEREGQ (141 aa)) is disordered. The span at 463–477 (DAEYGGAEAGEATRG) shows a compositional bias: low complexity. The span at 497-519 (ARNRDRSRLHADSERSAGDREGS) shows a compositional bias: basic and acidic residues. Residues 547 to 558 (GSSSASSRSVDS) are compositionally biased toward low complexity. Positions 584–602 (SGDREAREEREEREEREGQ) are enriched in basic and acidic residues. The next 3 helical transmembrane spans lie at 622-638 (VCVA…ALVL), 644-669 (VVGL…YAGI), and 681-702 (LLMV…IIIL).

Belongs to the amino acid/polyamine transporter 2 family.

Its subcellular location is the vacuole membrane. Functionally, putative amino acid transporter. Probably transports arginine. Involved in maintaining the osmotic homeostasis of the digestive vacuole. Required for extracellular parasite survival and bradyzoite differentiation. This is Putative amino acid transporter AAT1 from Toxoplasma gondii (strain ATCC 50611 / Me49).